Reading from the N-terminus, the 232-residue chain is Histone H1A (232 aa).

The segment covering 1–18 (MSDPAVEVTPAVPVASPA) has biased composition (low complexity). Disordered regions lie at residues 1–42 (MSDP…THLP) and 98–232 (LQTK…AKKA). The H15 domain maps to 39-113 (THLPVSDMVV…GASGSFKLPA (75 aa)). Composition is skewed to basic residues over residues 131-141 (KPKKAAAPKPK), 147-173 (KVKK…KTTK), 181-214 (AAKK…KAKK), and 222-232 (KAAKKPAAKKA).

It belongs to the histone H1/H5 family.

It localises to the nucleus. Its subcellular location is the chromosome. Histones H1 are necessary for the condensation of nucleosome chains into higher-order structures. The protein is Histone H1A of Chironomus tentans (Midge).